The following is a 519-amino-acid chain: MQKPIPRKMYILVPDKPAQIQNESAIAAKTISSVIRTCLGPRAMQKMVLTKINSIELTNDGNAILRELDVAHPSARSLIELAKTQDDEVGDGTTSVVLLAAEILNEMTYILDRDVHPIRICKALGRALEICIKAIDGAAISLDSNEETKIKIINGSVASKICNILKVPIGNLALEAVKKVYVKEENKCDLKNNMKVEKVLGGNLMESEVVDGVLINKDIIHPQMRRVIENPRIVIIESPLEYKKGESQTNYEFSKENDFTRALEIEEEQVREMCERIIGVRPDIVVCEKGISDLALSILFENNITGLRRLKKTDISRLSKVCGARSVSRPEDLEERHVGVSCGLFEYIKYGEEYYCKFSRCAHPKACSVVIRGPTKDILDELERNFMDAVKVAKSIFISPKLCPGGGAAEMAMAHELMQSAGDNEVEAEVFSRMASALTIIPSILLENSGVFNPLEAITLLEQKHKEGSFYGVNGTTGEIVDTRDLVLEPYAVKSQCIKSAVEAVSQLLRIDGIIESKR.

Belongs to the TCP-1 chaperonin family. In terms of assembly, component of the T-complex protein 1 (TCP1) complex.

The protein resides in the cytoplasm. Molecular chaperone; assists the folding of proteins upon ATP hydrolysis. In Encephalitozoon cuniculi (strain GB-M1) (Microsporidian parasite), this protein is T-complex protein 1 subunit gamma (CCT3).